An 823-amino-acid polypeptide reads, in one-letter code: Degenerin-like protein asic-1 (823 aa).

Residues 1 to 38 are Cytoplasmic-facing; it reads MGKNSLKRALELDVVDFAEHTSAHGIPRAYVSTGWRRY. Residues 39-59 form a helical membrane-spanning segment; that stretch reads MWLLCFLFCLSCFGHQAYLIV. Over 60 to 767 the chain is Extracellular; the sequence is ERFNRNDIIV…FGGQLGLWMG (708 aa). Cystine bridges form between cysteine 86–cysteine 518 and cysteine 494–cysteine 501. N-linked (GlcNAc...) asparagine glycosylation is found at asparagine 228, asparagine 326, asparagine 347, asparagine 415, and asparagine 486. Residues asparagine 527 and asparagine 546 are each glycosylated (N-linked (GlcNAc...) asparagine). 4 cysteine pairs are disulfide-bonded: cysteine 604–cysteine 687, cysteine 625–cysteine 683, cysteine 629–cysteine 681, and cysteine 638–cysteine 664. The GAS motif; ion selectivity filter signature appears at 767-769; sequence GVS. A helical membrane pass occupies residues 768–788; it reads VSVITIGEVACFFFEVFISLI. The Cytoplasmic portion of the chain corresponds to 789-795; it reads SSNRTKR.

This sequence belongs to the amiloride-sensitive sodium channel (TC 1.A.6) family. As to quaternary structure, homotrimer. Heterotrimer; with other ASIC proteins producing channel with different properties.

It localises to the cell membrane. The protein resides in the postsynaptic cell membrane. Its subcellular location is the cell projection. The protein localises to the dendrite. The enzyme catalyses Na(+)(in) = Na(+)(out). It catalyses the reaction K(+)(in) = K(+)(out). It carries out the reaction Li(+)(in) = Li(+)(out). The catalysed reaction is Ca(2+)(in) = Ca(2+)(out). In terms of biological role, forms voltage-independent, pH-gated trimeric sodium channels that act as postsynaptic excitatory receptors in the nervous system, playing a crucial role in regulating synaptic plasticity, learning, and memory. Promotes synaptic vesicle fusion to positively regulate the release of dopamine at dopaminergic neuron synapses. Displays high selectivity for sodium ions but can also permit the permeation of other cations. The sequence is that of Degenerin-like protein asic-1 from Caenorhabditis elegans.